The sequence spans 116 residues: MEYVEPLAPLYGGEYSTTGIVTLSVGIALLVLANAFAYALVKAFGIQSYYGRLLGGIVLLVLSMLLTLSTNSINKFRGAFTFAIGEIIIGGLDVINDKSGWSQPVVSPTVGCQGGA.

3 helical membrane passes run 20–40 (IVTL…AYAL), 53–73 (LLGG…TNSI), and 76–96 (FRGA…DVIN).

It localises to the host membrane. The chain is Putative transmembrane protein ORF116 from Acidianus bottle-shaped virus (isolate Italy/Pozzuoli) (ABV).